An 872-amino-acid polypeptide reads, in one-letter code: Extended synaptotagmin-2-A (872 aa).

The tract at residues 1–25 (MSSESSAEKGPPPSPAENVQPGVPP) is disordered. Residues 1 to 31 (MSSESSAEKGPPPSPAENVQPGVPPAAEEPG) are Cytoplasmic-facing. The chain crosses the membrane as a helical span at residues 32–52 (MISVDIAGLFYQFSKTFILIF). Topologically, residues 53–55 (PVY) are lumenal. The chain crosses the membrane as a helical span at residues 56-76 (VLGYFGLSFSWLLIALVLLLW). The Cytoplasmic segment spans residues 77 to 872 (WRRNKGNKNS…EDGTRPAVSS (796 aa)). The SMP-LTD domain maps to 119–298 (DIERAEWLNK…LPNRITVPLV (180 aa)). C2 domains lie at 297-417 (LVSD…DEWF) and 442-588 (NLDQ…HLNN). Ca(2+)-binding residues include Lys328, Asp329, Asp341, Asp388, Glu389, Asp390, Asp392, Asp394, and Asp395. The span at 608–617 (KPVRSPDEQH) shows a compositional bias: basic and acidic residues. The tract at residues 608–711 (KPVRSPDEQH…EPTPSIASDI (104 aa)) is disordered. Residues 632–652 (PPTPQMPSPSPAVAHKPPPTP) are compositionally biased toward pro residues. Polar residues predominate over residues 664–681 (NKGTPPSASPKSPTELHQ). Over residues 682-696 (SSSSLSGSSFTYSPS) the composition is skewed to low complexity. The region spanning 737–859 (PLGQIQLTIR…DAAKGWTQWY (123 aa)) is the C2 3 domain. Residues 784–791 (KRRSGRRK) are required for phosphatidylinositol 4,5-bisphosphate-dependent location at the cell membrane.

It belongs to the extended synaptotagmin family. In terms of assembly, interacts with fgfr1 that has been activated by fgf1 binding. Interacts (via C2 domains) with the AP-2 complex (via an alpha subunit). Identified in a complex with the AP-2 complex and fgfr1.

The protein localises to the cell membrane. Its subcellular location is the endoplasmic reticulum membrane. Functionally, tethers the endoplasmic reticulum to the cell membrane and promotes the formation of appositions between the endoplasmic reticulum and the cell membrane. Binds glycerophospholipids in a barrel-like domain and may play a role in cellular lipid transport. Plays a role in the rapid internalization of fgfr1 that has been activated by fgf1 binding; this occurs most likely via the AP-2 complex. Required for normal fgf signaling and the activation of downstream signaling cascades via its role in the internalization of activated fgfr1. Required for normal embryonic development via its role in fgf signaling and the downstream regulation of t/xBRA expression. The protein is Extended synaptotagmin-2-A (esyt2-a) of Xenopus laevis (African clawed frog).